The sequence spans 683 residues: Protein kinase C eta type (683 aa).

The C2 domain occupies 1 to 118 (MSSGTMKFNG…LRTAGTSDTF (118 aa)). Ser28 and Ser32 each carry phosphoserine. 2 Phorbol-ester/DAG-type zinc fingers span residues 171 to 222 (GHKF…VTAC) and 245 to 295 (PHKF…APNC). At Ser317 the chain carries Phosphoserine. One can recognise a Protein kinase domain in the interval 355 to 614 (FEFIRVLGKG…EHEILRHPFF (260 aa)). ATP is bound by residues 361–369 (LGKGSFGKV) and Lys384. Asp479 (proton acceptor) is an active-site residue. Thr513 carries the phosphothreonine; by PDPK1 modification. The AGC-kinase C-terminal domain maps to 615 to 683 (KEIDWAQLNH…FSYVSPELQL (69 aa)). The residue at position 656 (Thr656) is a Phosphothreonine. The residue at position 675 (Ser675) is a Phosphoserine.

Belongs to the protein kinase superfamily. AGC Ser/Thr protein kinase family. PKC subfamily. In terms of assembly, interacts with FYN. Interacts with RALA. Interacts with DGKQ. Predominantly expressed in lung and skin.

It localises to the cytoplasm. It catalyses the reaction L-seryl-[protein] + ATP = O-phospho-L-seryl-[protein] + ADP + H(+). The enzyme catalyses L-threonyl-[protein] + ATP = O-phospho-L-threonyl-[protein] + ADP + H(+). With respect to regulation, novel PKCs (PRKCD, PRKCE, PRKCH and PRKCQ) are calcium-insensitive, but activated by diacylglycerol (DAG) and phosphatidylserine. Three specific sites; Thr-513 (activation loop of the kinase domain), Thr-656 (turn motif) and Ser-675 (hydrophobic region), need to be phosphorylated for its full activation. Calcium-independent, phospholipid- and diacylglycerol (DAG)-dependent serine/threonine-protein kinase that is involved in the regulation of cell differentiation in keratinocytes and pre-B cell receptor, mediates regulation of epithelial tight junction integrity and foam cell formation, and is required for glioblastoma proliferation and apoptosis prevention in MCF-7 cells. In keratinocytes, binds and activates the tyrosine kinase FYN, which in turn blocks epidermal growth factor receptor (EGFR) signaling and leads to keratinocyte growth arrest and differentiation. Associates with the cyclin CCNE1-CDK2-CDKN1B complex and inhibits CDK2 kinase activity, leading to RB1 dephosphorylation and thereby G1 arrest in keratinocytes. In association with RALA activates actin depolymerization, which is necessary for keratinocyte differentiation. In the pre-B cell receptor signaling, functions downstream of BLNK by up-regulating IRF4, which in turn activates L chain gene rearrangement. Regulates epithelial tight junctions (TJs) by phosphorylating occludin (OCLN) on threonine residues, which is necessary for the assembly and maintenance of TJs. In association with PLD2 and via TLR4 signaling, is involved in lipopolysaccharide (LPS)-induced RGS2 down-regulation and foam cell formation. Upon PMA stimulation, mediates glioblastoma cell proliferation by activating the mTOR pathway, the PI3K/AKT pathway and the ERK1-dependent phosphorylation of ELK1. Involved in the protection of glioblastoma cells from irradiation-induced apoptosis by preventing caspase-9 activation. In camptothecin-treated MCF-7 cells, regulates NF-kappa-B upstream signaling by activating IKBKB, and confers protection against DNA damage-induced apoptosis. Promotes oncogenic functions of ATF2 in the nucleus while blocking its apoptotic function at mitochondria. Phosphorylates ATF2 which promotes its nuclear retention and transcriptional activity and negatively regulates its mitochondrial localization. This chain is Protein kinase C eta type (Prkch), found in Mus musculus (Mouse).